The primary structure comprises 177 residues: MKQSLTLVFLVAIGYATAYTTSHDYSGGYGGGCYGSDCDSGYGDSGYGGGCTGGDCGGGYGGGYGGGCSGGDCGNYGGGYGGDCNGGDCGNYGGGYGGGNGGGCSGGNCGGGFDEAFPAPYGGDYGNGGNGFGKGGSKGNNYGKGYGGGSGKGKGGGKGGKGGKGGTYKPSHYGGGY.

A signal peptide spans 1 to 18; the sequence is MKQSLTLVFLVAIGYATA. 5 consecutive repeat copies span residues 25-41, 42-59, 60-75, 76-91, and 92-112. Residues 25–112 form a 5 X approximate tandem repeats region; sequence YSGGYGGGCY…GCSGGNCGGG (88 aa). Positions 149-166 are enriched in gly residues; sequence GSGKGKGGGKGGKGGKGG. Residues 149–177 form a disordered region; the sequence is GSGKGKGGGKGGKGGKGGTYKPSHYGGGY.

This is Eggshell protein (F10) from Schistosoma mansoni (Blood fluke).